The chain runs to 541 residues: Glucose-6-phosphate isomerase (541 aa).

Catalysis depends on glutamate 346, which acts as the Proton donor. Residues histidine 377 and lysine 506 contribute to the active site.

Belongs to the GPI family.

The protein resides in the cytoplasm. The catalysed reaction is alpha-D-glucose 6-phosphate = beta-D-fructose 6-phosphate. It functions in the pathway carbohydrate biosynthesis; gluconeogenesis. The protein operates within carbohydrate degradation; glycolysis; D-glyceraldehyde 3-phosphate and glycerone phosphate from D-glucose: step 2/4. In terms of biological role, catalyzes the reversible isomerization of glucose-6-phosphate to fructose-6-phosphate. The protein is Glucose-6-phosphate isomerase of Sinorhizobium medicae (strain WSM419) (Ensifer medicae).